Consider the following 160-residue polypeptide: Ribosome maturation factor RimP (160 aa).

The protein belongs to the RimP family.

It is found in the cytoplasm. Its function is as follows. Required for maturation of 30S ribosomal subunits. This is Ribosome maturation factor RimP from Orientia tsutsugamushi (strain Ikeda) (Rickettsia tsutsugamushi).